The primary structure comprises 239 residues: 4-hydroxy-tetrahydrodipicolinate reductase (239 aa).

NAD(+)-binding positions include 8–13 (GSTGKM), 78–80 (GTT), and 102–105 (SANM). Catalysis depends on H134, which acts as the Proton donor/acceptor. H135 provides a ligand contact to (S)-2,3,4,5-tetrahydrodipicolinate. The active-site Proton donor is the K138. 144 to 145 (GT) is a (S)-2,3,4,5-tetrahydrodipicolinate binding site.

The protein belongs to the DapB family.

The protein resides in the cytoplasm. It carries out the reaction (S)-2,3,4,5-tetrahydrodipicolinate + NAD(+) + H2O = (2S,4S)-4-hydroxy-2,3,4,5-tetrahydrodipicolinate + NADH + H(+). The enzyme catalyses (S)-2,3,4,5-tetrahydrodipicolinate + NADP(+) + H2O = (2S,4S)-4-hydroxy-2,3,4,5-tetrahydrodipicolinate + NADPH + H(+). It participates in amino-acid biosynthesis; L-lysine biosynthesis via DAP pathway; (S)-tetrahydrodipicolinate from L-aspartate: step 4/4. Its function is as follows. Catalyzes the conversion of 4-hydroxy-tetrahydrodipicolinate (HTPA) to tetrahydrodipicolinate. This is 4-hydroxy-tetrahydrodipicolinate reductase from Rickettsia conorii (strain ATCC VR-613 / Malish 7).